The chain runs to 302 residues: Probable 2-(5''-triphosphoribosyl)-3'-dephosphocoenzyme-A synthase 1 (302 aa).

It belongs to the CitG/MdcB family.

The catalysed reaction is 3'-dephospho-CoA + ATP = 2'-(5''-triphospho-alpha-D-ribosyl)-3'-dephospho-CoA + adenine. The chain is Probable 2-(5''-triphosphoribosyl)-3'-dephosphocoenzyme-A synthase 1 from Salmonella typhi.